Reading from the N-terminus, the 500-residue chain is Xylan O-acetyltransferase 2 (500 aa).

The Cytoplasmic portion of the chain corresponds to 1 to 25; it reads MGLPGRRNPLLSARRAAASLRRSRR. The chain crosses the membrane as a helical; Signal-anchor for type II membrane protein span at residues 26–43; sequence LPVYVAAVFFVASVLLMF. The Lumenal portion of the chain corresponds to 44 to 500; sequence RDEILYLTTA…RPPAAAGHVA (457 aa). The interval 84 to 116 is disordered; sequence PVLLGHGGKPEKHHSVTERHRPKVSAKRRPNKK. Residues 91-102 show a composition bias toward basic and acidic residues; the sequence is GKPEKHHSVTER. The segment covering 103 to 116 has biased composition (basic residues); the sequence is HRPKVSAKRRPNKK. 4 disulfide bridges follow: cysteine 143/cysteine 194, cysteine 165/cysteine 231, cysteine 174/cysteine 472, and cysteine 388/cysteine 468. Residues asparagine 144 and asparagine 154 are each glycosylated (N-linked (GlcNAc...) asparagine). The GDS motif motif lies at 218–220; that stretch reads GDS. The active-site Nucleophile is the serine 220. Asparagine 260 and asparagine 416 each carry an N-linked (GlcNAc...) asparagine glycan. Catalysis depends on aspartate 467, which acts as the Proton donor. The short motif at 467–470 is the DXXH motif element; it reads DCIH. Histidine 470 (proton acceptor) is an active-site residue.

Belongs to the PC-esterase family. TBL subfamily. Expressed at low levels in roots and leaves.

It localises to the golgi apparatus membrane. Functionally, xylan acetyltransferase required for 2-O- and 3-O-monoacetylation of xylosyl residues in xylan. Catalyzes the 2-O-acetylation of xylan, followed by nonenzymatic acetyl migration to the O-3 position, resulting in products that are monoacetylated at both O-2 and O-3 positions. This Oryza sativa subsp. japonica (Rice) protein is Xylan O-acetyltransferase 2.